A 269-amino-acid polypeptide reads, in one-letter code: 2-heptyl-3-hydroxy-4(1H)-quinolone dioxygenase (269 aa).

His-97 lines the substrate pocket. The active-site Proton donor/acceptor is the His-246.

The protein belongs to the AB hydrolase superfamily. As to quaternary structure, monomer.

It carries out the reaction 2-heptyl-3-hydroxy-4(1H)-quinolone + O2 = N-octanoylanthranilate + CO + H(+). Its function is as follows. Ring-cleaving dioxygenase involved in the degradation pathway of the Pseudomonas aeruginosa quorum sensing signal molecules HHQ (2-heptyl-4-quinolone) and PQS (2-heptyl-3-hydroxy-4(1H)-quinolone) to anthranilate. Catalyzes the cleavage of PQS to form N-octanoylanthranilate and carbon monoxide. Thus, leads to the inactivation of PQS that plays a central role in the regulation of virulence factor production by P.aeruginosa, thereby quenching the production of antimicrobials, which may contribute to the competitiveness of M.abscessus in presence of P.aeruginosa. In vitro, can also use other 2-alkyl-3-hydroxy-4(1H)-quinolone (AHQ) substrates with shorter alkyl substituents at C2, but with lower efficiency. The polypeptide is 2-heptyl-3-hydroxy-4(1H)-quinolone dioxygenase (Mycobacteroides abscessus (strain ATCC 19977 / DSM 44196 / CCUG 20993 / CIP 104536 / JCM 13569 / NCTC 13031 / TMC 1543 / L948) (Mycobacterium abscessus)).